A 440-amino-acid polypeptide reads, in one-letter code: Xylose isomerase (440 aa).

Mg(2+) contacts are provided by Asp-307 and Asp-309.

It belongs to the xylose isomerase family. In terms of assembly, homotetramer. Mg(2+) serves as cofactor.

It is found in the cytoplasm. It carries out the reaction alpha-D-xylose = alpha-D-xylulofuranose. This Pectobacterium carotovorum subsp. carotovorum (strain PC1) protein is Xylose isomerase.